Consider the following 454-residue polypeptide: Chromosomal replication initiator protein DnaA (454 aa).

Residues 1–71 are domain I, interacts with DnaA modulators; it reads MTKEQWGQLQ…HEVRQEDPAV (71 aa). Positions 71–112 are domain II; it reads VRRLRFAVPSHVNATTKPARPAQATAPRAPAEKTPRSTLSTA. The interval 82–108 is disordered; that stretch reads VNATTKPARPAQATAPRAPAEKTPRST. Positions 84 to 99 are enriched in low complexity; that stretch reads ATTKPARPAQATAPRA. Residues 113–334 are domain III, AAA+ region; sequence PLDARFTFDN…GALTRLCAFA (222 aa). ATP contacts are provided by G157, G159, K160, and T161. A domain IV, binds dsDNA region spans residues 335–454; it reads SLVGREIDME…LELLRRALEE (120 aa).

The protein belongs to the DnaA family. In terms of assembly, oligomerizes as a right-handed, spiral filament on DNA at oriC.

The protein resides in the cytoplasm. In terms of biological role, plays an essential role in the initiation and regulation of chromosomal replication. ATP-DnaA binds to the origin of replication (oriC) to initiate formation of the DNA replication initiation complex once per cell cycle. Binds the DnaA box (a 9 base pair repeat at the origin) and separates the double-stranded (ds)DNA. Forms a right-handed helical filament on oriC DNA; dsDNA binds to the exterior of the filament while single-stranded (ss)DNA is stabiized in the filament's interior. The ATP-DnaA-oriC complex binds and stabilizes one strand of the AT-rich DNA unwinding element (DUE), permitting loading of DNA polymerase. After initiation quickly degrades to an ADP-DnaA complex that is not apt for DNA replication. Binds acidic phospholipids. This chain is Chromosomal replication initiator protein DnaA, found in Roseobacter denitrificans (strain ATCC 33942 / OCh 114) (Erythrobacter sp. (strain OCh 114)).